The sequence spans 279 residues: Biotin synthase (279 aa).

Residues 2–228 enclose the Radical SAM core domain; it reads KTIMLCAISS…NARIMIAGGR (227 aa). C17, C21, and C24 together coordinate [4Fe-4S] cluster. [2Fe-2S] cluster-binding residues include C61, C96, C154, and R221.

The protein belongs to the radical SAM superfamily. Biotin synthase family. As to quaternary structure, homodimer. [4Fe-4S] cluster is required as a cofactor. The cofactor is [2Fe-2S] cluster.

It carries out the reaction (4R,5S)-dethiobiotin + (sulfur carrier)-SH + 2 reduced [2Fe-2S]-[ferredoxin] + 2 S-adenosyl-L-methionine = (sulfur carrier)-H + biotin + 2 5'-deoxyadenosine + 2 L-methionine + 2 oxidized [2Fe-2S]-[ferredoxin]. The protein operates within cofactor biosynthesis; biotin biosynthesis; biotin from 7,8-diaminononanoate: step 2/2. In terms of biological role, catalyzes the conversion of dethiobiotin (DTB) to biotin by the insertion of a sulfur atom into dethiobiotin via a radical-based mechanism. The polypeptide is Biotin synthase (Campylobacter curvus (strain 525.92)).